Consider the following 4568-residue polypeptide: Dynein beta chain, flagellar outer arm (4568 aa).

The segment at 1-1880 (MAEDEGMTAA…QVNICDAEIA (1880 aa)) is stem. 5 coiled-coil regions span residues 277–293 (FQRL…EAND), 1158–1175 (EEAA…RKAL), 1372–1400 (KIDV…RNYD), 1614–1650 (EACT…RVAF), and 1778–1825 (QEIN…RKKL). Residues 1144–1166 (GVEEEPEYHPDQDPEEAAAKKAA) form a disordered region. Positions 1150–1166 (EYHPDQDPEEAAAKKAA) are enriched in basic and acidic residues. 4 AAA regions span residues 1881-2102 (YSYE…TLYV), 2164-2385 (EAAH…RNFK), 2493-2738 (QYIP…ITQG), and 2841-3090 (EYNE…FRRY). ATP-binding positions include 1919–1926 (GPAGTGKT), 2202–2209 (GAAGCGKT), and 2530–2537 (GNTGTGKS). A coiled-coil region spans residues 2831–2848 (LRKTLEDKLREYNESNAV). Position 2879–2886 (2879–2886 (GVGGSGKQ)) interacts with ATP. Coiled-coil stretches lie at residues 3106–3162 (KMLL…DELI), 3339–3425 (KRAA…RLES), and 3648–3728 (HERP…KARE). The segment at 3106 to 3425 (KMLLQLKRDD…WGAEIKRLES (320 aa)) is stalk. AAA stretches follow at residues 3481–3711 (LTDD…EIEE) and 3937–4172 (MGRF…TANN).

This sequence belongs to the dynein heavy chain family. Consists of at least 3 heavy chains (alpha, beta and gamma), 2 intermediate chains and 8 light chains.

It localises to the cell projection. It is found in the cilium. The protein localises to the flagellum. The protein resides in the cytoplasm. Its subcellular location is the cytoskeleton. It localises to the flagellum axoneme. Its function is as follows. Force generating protein of eukaryotic cilia and flagella. Produces force towards the minus ends of microtubules. Dynein has ATPase activity; the force-producing power stroke is thought to occur on release of ADP. The chain is Dynein beta chain, flagellar outer arm (ODA4) from Chlamydomonas reinhardtii (Chlamydomonas smithii).